A 309-amino-acid chain; its full sequence is tRNA dimethylallyltransferase (309 aa).

10 to 17 (GPTAVGKT) lines the ATP pocket. Substrate is bound at residue 12-17 (TAVGKT). An interaction with substrate tRNA region spans residues 35 to 38 (DSMQ).

This sequence belongs to the IPP transferase family. In terms of assembly, monomer. Requires Mg(2+) as cofactor.

It carries out the reaction adenosine(37) in tRNA + dimethylallyl diphosphate = N(6)-dimethylallyladenosine(37) in tRNA + diphosphate. In terms of biological role, catalyzes the transfer of a dimethylallyl group onto the adenine at position 37 in tRNAs that read codons beginning with uridine, leading to the formation of N6-(dimethylallyl)adenosine (i(6)A). The polypeptide is tRNA dimethylallyltransferase (Clostridium botulinum (strain Eklund 17B / Type B)).